The chain runs to 279 residues: Four and a half LIM domains protein 2 (279 aa).

Residues 7-31 (CHHCNESLYGKKYILKEENPHCVAC) form a C4-type zinc finger. LIM zinc-binding domains follow at residues 40–92 (CEEC…CTDC), 101–153 (CQEC…CVPC), and 162–212 (CVQC…CLTC). A Glycyl lysine isopeptide (Lys-Gly) (interchain with G-Cter in SUMO2) cross-link involves residue Lys78. Glycyl lysine isopeptide (Lys-Gly) (interchain with G-Cter in SUMO2) cross-links involve residues Lys167 and Lys220. The LIM zinc-binding 4 domain occupies 221–275 (CAGCTNPISGLGGTKYISFEERQWHNDCFNCKKCSLSLVGRGFLTERDDILCPDC). Ser238 is subject to Phosphoserine.

In terms of assembly, interacts with ZNF638 and TTN/titin. Interacts with E4F1. Interacts with GRB7. Interacts with SIRT1 and FOXO1. Interacts with CEFIP and calcineurin. Interacts with FOXK1. In terms of tissue distribution, expressed in heart only (at protein level).

It localises to the cytoplasm. It is found in the nucleus. The protein localises to the myofibril. Its subcellular location is the sarcomere. The protein resides in the z line. May function as a molecular transmitter linking various signaling pathways to transcriptional regulation. Negatively regulates the transcriptional repressor E4F1 and may function in cell growth. Inhibits the transcriptional activity of FOXO1 and its apoptotic function by enhancing the interaction of FOXO1 with SIRT1 and FOXO1 deacetylation. Negatively regulates the calcineurin/NFAT signaling pathway in cardiomyocytes. This is Four and a half LIM domains protein 2 (Fhl2) from Rattus norvegicus (Rat).